The sequence spans 353 residues: Polycomb group RING finger protein 6 (353 aa).

Residues 1-116 form a disordered region; the sequence is MDEAETDATE…FSLRLESGRA (116 aa). Basic and acidic residues predominate over residues 9–19; the sequence is TENKRASEAKR. Pro residues predominate over residues 23 to 39; sequence MPPPPPPPPPISPPALI. A Phosphoserine modification is found at serine 34. The segment covering 40 to 52 has biased composition (low complexity); it reads PAPAAGEEGPASL. A compositionally biased stretch (basic and acidic residues) spans 69–82; that stretch reads EPERSLGRLRGRFE. Residues 71–112 adopt a coiled-coil conformation; that stretch reads ERSLGRLRGRFEDYDEELEEEEEMEEEEEEEEEMSHFSLRLE. Acidic residues predominate over residues 83-103; that stretch reads DYDEELEEEEEMEEEEEEEEE. A Phosphoserine modification is found at serine 118. Residues 137 to 176 form an RING-type zinc finger; sequence CSICKGYLIDATTITECLHTFCKSCIVRHFYYSNRCPKCN. Residues lysine 226 and lysine 237 each participate in a glycyl lysine isopeptide (Lys-Gly) (interchain with G-Cter in SUMO2) cross-link.

In terms of assembly, component of a PRC1-like complex. Interacts with BMI1/PCGF4, RING1 and RNF2. Interacts with KDM5D. Interacts with CBX4, CBX6, CBX7 and CBX8. Phosphorylated during mitosis. As to expression, expressed in ovary, testis, stomach, liver, thymus and kidney (at protein level).

The protein localises to the nucleus. Functionally, transcriptional repressor. May modulate the levels of histone H3K4Me3 by activating KDM5D histone demethylase. Component of a Polycomb group (PcG) multiprotein PRC1-like complex, a complex class required to maintain the transcriptionally repressive state of many genes, including Hox genes, throughout development. PcG PRC1 complex acts via chromatin remodeling and modification of histones; it mediates monoubiquitination of histone H2A 'Lys-119', rendering chromatin heritably changed in its expressibility. Within the PRC1-like complex, regulates RNF2 ubiquitin ligase activity. In Mus musculus (Mouse), this protein is Polycomb group RING finger protein 6 (Pcgf6).